We begin with the raw amino-acid sequence, 220 residues long: 7-cyano-7-deazaguanine synthase (220 aa).

7 to 17 serves as a coordination point for ATP; the sequence is LSGGMDSSTLA. Residues Cys187, Cys195, Cys198, and Cys201 each contribute to the Zn(2+) site.

The protein belongs to the QueC family. Zn(2+) is required as a cofactor.

The catalysed reaction is 7-carboxy-7-deazaguanine + NH4(+) + ATP = 7-cyano-7-deazaguanine + ADP + phosphate + H2O + H(+). It functions in the pathway purine metabolism; 7-cyano-7-deazaguanine biosynthesis. Functionally, catalyzes the ATP-dependent conversion of 7-carboxy-7-deazaguanine (CDG) to 7-cyano-7-deazaguanine (preQ(0)). In Methanospirillum hungatei JF-1 (strain ATCC 27890 / DSM 864 / NBRC 100397 / JF-1), this protein is 7-cyano-7-deazaguanine synthase.